Reading from the N-terminus, the 449-residue chain is Glutamyl-tRNA reductase (449 aa).

Substrate-binding positions include 58 to 61 (TCNR), S121, 126 to 128 (ETQ), and Q132. C59 serves as the catalytic Nucleophile. 203–208 (GLGEMA) serves as a coordination point for NADP(+).

It belongs to the glutamyl-tRNA reductase family. Homodimer.

The catalysed reaction is (S)-4-amino-5-oxopentanoate + tRNA(Glu) + NADP(+) = L-glutamyl-tRNA(Glu) + NADPH + H(+). Its pathway is porphyrin-containing compound metabolism; protoporphyrin-IX biosynthesis; 5-aminolevulinate from L-glutamyl-tRNA(Glu): step 1/2. Functionally, catalyzes the NADPH-dependent reduction of glutamyl-tRNA(Glu) to glutamate 1-semialdehyde (GSA). This is Glutamyl-tRNA reductase from Helicobacter pylori (strain G27).